Here is a 431-residue protein sequence, read N- to C-terminus: Adenylosuccinate synthetase (431 aa).

GTP-binding positions include 12-18 (GDEGKGK) and 40-42 (GHT). Aspartate 13 (proton acceptor) is an active-site residue. Aspartate 13 and glycine 40 together coordinate Mg(2+). IMP-binding positions include 13 to 16 (DEGK), 38 to 41 (NAGH), threonine 130, arginine 144, glutamine 225, threonine 240, and arginine 304. Histidine 41 (proton donor) is an active-site residue. 300–306 (ATTGRPR) is a binding site for substrate. GTP-binding positions include arginine 306, 332–334 (KLD), and 414–416 (SVG).

This sequence belongs to the adenylosuccinate synthetase family. In terms of assembly, homodimer. It depends on Mg(2+) as a cofactor.

The protein resides in the cytoplasm. It catalyses the reaction IMP + L-aspartate + GTP = N(6)-(1,2-dicarboxyethyl)-AMP + GDP + phosphate + 2 H(+). Its pathway is purine metabolism; AMP biosynthesis via de novo pathway; AMP from IMP: step 1/2. Plays an important role in the de novo pathway of purine nucleotide biosynthesis. Catalyzes the first committed step in the biosynthesis of AMP from IMP. This chain is Adenylosuccinate synthetase, found in Geotalea daltonii (strain DSM 22248 / JCM 15807 / FRC-32) (Geobacter daltonii).